We begin with the raw amino-acid sequence, 409 residues long: Glutamyl-tRNA reductase (409 aa).

Residues 48–51, Ser-89, 94–96, and Gln-100 contribute to the substrate site; these read TCNR and ENE. Cys-49 (nucleophile) is an active-site residue. 165–170 is an NADP(+) binding site; sequence GNGMLA.

The protein belongs to the glutamyl-tRNA reductase family. Homodimer.

It carries out the reaction (S)-4-amino-5-oxopentanoate + tRNA(Glu) + NADP(+) = L-glutamyl-tRNA(Glu) + NADPH + H(+). It participates in porphyrin-containing compound metabolism; protoporphyrin-IX biosynthesis; 5-aminolevulinate from L-glutamyl-tRNA(Glu): step 1/2. In terms of biological role, catalyzes the NADPH-dependent reduction of glutamyl-tRNA(Glu) to glutamate 1-semialdehyde (GSA). The chain is Glutamyl-tRNA reductase from Thermoplasma volcanium (strain ATCC 51530 / DSM 4299 / JCM 9571 / NBRC 15438 / GSS1).